A 339-amino-acid polypeptide reads, in one-letter code: Lipoate-protein ligase A (339 aa).

The BPL/LPL catalytic domain occupies 29–216 (DPSQQVLFLW…SFENFYAGKA (188 aa)). Residues Arg71, 76–79 (GAVF), and Lys134 contribute to the ATP site. Lys134 is a (R)-lipoate binding site.

The protein belongs to the LplA family. Monomer.

It localises to the cytoplasm. It carries out the reaction L-lysyl-[lipoyl-carrier protein] + (R)-lipoate + ATP = N(6)-[(R)-lipoyl]-L-lysyl-[lipoyl-carrier protein] + AMP + diphosphate + H(+). It functions in the pathway protein modification; protein lipoylation via exogenous pathway; protein N(6)-(lipoyl)lysine from lipoate: step 1/2. It participates in protein modification; protein lipoylation via exogenous pathway; protein N(6)-(lipoyl)lysine from lipoate: step 2/2. Functionally, catalyzes both the ATP-dependent activation of exogenously supplied lipoate to lipoyl-AMP and the transfer of the activated lipoyl onto the lipoyl domains of lipoate-dependent enzymes. In Bdellovibrio bacteriovorus (strain ATCC 15356 / DSM 50701 / NCIMB 9529 / HD100), this protein is Lipoate-protein ligase A.